We begin with the raw amino-acid sequence, 136 residues long: MLQPKKTKHRKTFRLYHDKRDAHSGNFVAFGDYGLQATGSAWVSAAQIEAARIAITRRMGREGQVIIRVFPHLALTSKPIGVRMGSGKGSVDRWVAVVKRNTILFEVRGVKDEIARDALRLGGHKLPLKWKIVATV.

This sequence belongs to the universal ribosomal protein uL16 family. Part of the 50S ribosomal subunit.

Its function is as follows. Binds 23S rRNA and is also seen to make contacts with the A and possibly P site tRNAs. This is Large ribosomal subunit protein uL16 from Mesomycoplasma hyopneumoniae (strain 232) (Mycoplasma hyopneumoniae).